Reading from the N-terminus, the 665-residue chain is GRB2-associated-binding protein 2 (665 aa).

Residue S2 is modified to Phosphoserine. The region spanning D8–G119 is the PH domain. Residues R131–T184 are disordered. 10 positions are modified to phosphoserine: S135, S142, S143, S149, S150, S160, S165, S211, S220, and S261. Positions S160 to L170 are enriched in polar residues. A Phosphothreonine modification is found at T262. Residue Y263 is modified to Phosphotyrosine. The residue at position 275 (T275) is a Phosphothreonine. Residues S278 and S282 each carry the phosphoserine modification. At T284 the chain carries Phosphothreonine. Y290 is modified (phosphotyrosine). T328 is subject to Phosphothreonine. Residues V338–R396 are disordered. The SH3-binding motif lies at P348–P355. Polar residues predominate over residues Q357–V379. S365 is subject to Phosphoserine. Phosphothreonine occurs at positions 382 and 388. Residue S402 is modified to Phosphoserine. A Phosphothreonine modification is found at T405. Positions Y408–N445 are disordered. S420 is modified (phosphoserine). The segment covering G430 to D439 has biased composition (polar residues). The residue at position 441 (Y441) is a Phosphotyrosine. At S469 the chain carries Phosphoserine. The disordered stretch occupies residues P491–L517. Positions P499–P508 match the SH3-binding motif. S532 is subject to Phosphoserine. Composition is skewed to polar residues over residues S548–S566 and N578–S600. Disordered stretches follow at residues S548–Y632 and T646–L665. S612 carries the phosphoserine modification. Y632 is subject to Phosphotyrosine. Residues T646 to P659 show a composition bias toward polar residues.

This sequence belongs to the GAB family. In terms of assembly, part of a complex composed of EEIG1, TNFRSF11A/RANK, PLCG2, GAB2, TEC and BTK; complex formation increases in the presence of TNFSF11/RANKL. Interacts with HCK. Interacts with SHC1; may mediate interaction with receptors. Interacts with SYK. Interacts with PI-3 kinase. Interacts with GRB2 (via SH3 2 domain). Interacts (phosphorylated) with PTPN11. Interacts with TNFRSF11A (via cytoplasmic domain). Interacts (phosphorylated) with 14-3-3 family proteins SFN, YWHAB, YWHAE, YWHAG, YWHAH, YWHAQ and YWHAZ; prevents interaction with GRB2 and attenuates GAB2 signaling. In terms of processing, phosphorylated upon EGF stimulation. Phosphorylated on tyrosine residues by HCK upon IL6 signaling. Phosphorylated on tyrosine residue(s) by the thrombopoietin receptor (TPOR), stem cell factor receptor (SCFR), and T-cell and B-cell antigen receptors, gp130, IL-2R and IL-3R. Phosphorylated upon stimulation of TNFRSF11A/RANK by TNFSF11/RANKL. Dephosphorylated by PTPN11. In terms of tissue distribution, ubiquitously expressed.

The protein resides in the cytoplasm. Its subcellular location is the cell membrane. It localises to the membrane raft. In terms of biological role, adapter protein which acts downstream of several membrane receptors including cytokine, antigen, hormone, cell matrix and growth factor receptors to regulate multiple signaling pathways. Regulates osteoclast differentiation mediating the TNFRSF11A/RANK signaling. In allergic response, it plays a role in mast cells activation and degranulation through PI-3-kinase regulation. Also involved in the regulation of cell proliferation and hematopoiesis. The protein is GRB2-associated-binding protein 2 (Gab2) of Mus musculus (Mouse).